Reading from the N-terminus, the 217-residue chain is Ribonuclease HII (217 aa).

The RNase H type-2 domain maps to 16–217; the sequence is YCIAGVDEVG…VARVLGTYHD (202 aa). Residues aspartate 22, glutamate 23, and aspartate 114 each contribute to the a divalent metal cation site.

Belongs to the RNase HII family. Requires Mn(2+) as cofactor. The cofactor is Mg(2+).

The protein localises to the cytoplasm. The catalysed reaction is Endonucleolytic cleavage to 5'-phosphomonoester.. In terms of biological role, endonuclease that specifically degrades the RNA of RNA-DNA hybrids. The protein is Ribonuclease HII of Colwellia psychrerythraea (strain 34H / ATCC BAA-681) (Vibrio psychroerythus).